Consider the following 190-residue polypeptide: Lipid A acyltransferase PagP (190 aa).

An N-terminal signal peptide occupies residues 1–29; sequence MYVAMIIRKYFLIIALLLMPWLAIPSVSA. Active-site residues include histidine 62, aspartate 105, and serine 106.

The protein belongs to the lipid A palmitoyltransferase family. In terms of assembly, homodimer.

Its subcellular location is the cell outer membrane. It carries out the reaction a lipid A + a 1,2-diacyl-sn-glycero-3-phosphocholine = a hepta-acyl lipid A + a 2-acyl-sn-glycero-3-phosphocholine. The catalysed reaction is a lipid IVA + a 1,2-diacyl-sn-glycero-3-phosphocholine = a lipid IVB + a 2-acyl-sn-glycero-3-phosphocholine. It catalyses the reaction a lipid IIA + a 1,2-diacyl-sn-glycero-3-phosphocholine = a lipid IIB + a 2-acyl-sn-glycero-3-phosphocholine. Its function is as follows. Transfers a fatty acid residue from the sn-1 position of a phospholipid to the N-linked hydroxyfatty acid chain on the proximal unit of lipid A or its precursors. Required for resistance to cationic antimicrobial peptides (CAMPs). Modifications of lipid A with an acyl chain allow to evade host immune defenses by resisting antimicrobial peptides and attenuating the inflammatory response to infection triggered by lipopolysaccharide through the Toll-like receptor 4 (TLR4) signal transduction pathway. This Salmonella typhimurium (strain LT2 / SGSC1412 / ATCC 700720) protein is Lipid A acyltransferase PagP.